A 430-amino-acid chain; its full sequence is Adenylosuccinate synthetase (430 aa).

Residues 12 to 18 and 40 to 42 each bind GTP; these read GDEGKGK and GHT. D13 functions as the Proton acceptor in the catalytic mechanism. Mg(2+) contacts are provided by D13 and G40. Residues 13 to 16, 38 to 41, T130, R144, Q224, T239, and R303 each bind IMP; these read DEGK and NAGH. Catalysis depends on H41, which acts as the Proton donor. A substrate-binding site is contributed by 299–305; that stretch reads VNTGRKR. GTP is bound by residues R305, 331-333, and 413-415; these read KLD and STS.

The protein belongs to the adenylosuccinate synthetase family. As to quaternary structure, homodimer. It depends on Mg(2+) as a cofactor.

The protein localises to the cytoplasm. It carries out the reaction IMP + L-aspartate + GTP = N(6)-(1,2-dicarboxyethyl)-AMP + GDP + phosphate + 2 H(+). The protein operates within purine metabolism; AMP biosynthesis via de novo pathway; AMP from IMP: step 1/2. Plays an important role in the de novo pathway of purine nucleotide biosynthesis. Catalyzes the first committed step in the biosynthesis of AMP from IMP. The protein is Adenylosuccinate synthetase of Rhodopseudomonas palustris (strain BisA53).